The following is a 187-amino-acid chain: GTP cyclohydrolase 1 (187 aa).

3 residues coordinate Zn(2+): Cys-76, His-79, and Cys-148.

It belongs to the GTP cyclohydrolase I family. Toroid-shaped homodecamer, composed of two pentamers of five dimers.

The enzyme catalyses GTP + H2O = 7,8-dihydroneopterin 3'-triphosphate + formate + H(+). It functions in the pathway cofactor biosynthesis; 7,8-dihydroneopterin triphosphate biosynthesis; 7,8-dihydroneopterin triphosphate from GTP: step 1/1. In Streptococcus agalactiae serotype III (strain NEM316), this protein is GTP cyclohydrolase 1.